The sequence spans 128 residues: Large ribosomal subunit protein mL52 (128 aa).

Residues 1 to 28 (MLQIAKLCLATSGRITAQRYVAVTTARA) constitute a mitochondrion transit peptide.

Belongs to the mitochondrion-specific ribosomal protein mL52 family. As to quaternary structure, component of the mitochondrial ribosome large subunit (39S) which comprises a 16S rRNA and about 50 distinct proteins.

It is found in the mitochondrion. The sequence is that of Large ribosomal subunit protein mL52 (mRpL52) from Drosophila pseudoobscura pseudoobscura (Fruit fly).